A 418-amino-acid polypeptide reads, in one-letter code: Tyrosine--tRNA ligase 1 (418 aa).

An L-tyrosine-binding site is contributed by tyrosine 34. The 'HIGH' region motif lies at 39–48; that stretch reads PTADSLHIGH. 2 residues coordinate L-tyrosine: tyrosine 169 and glutamine 173. Positions 230-234 match the 'KMSKS' region motif; the sequence is KFGKT. Lysine 233 serves as a coordination point for ATP. Residues 352 to 418 form the S4 RNA-binding domain; it reads TVLIDLLVES…GKKKYFLIRY (67 aa).

Belongs to the class-I aminoacyl-tRNA synthetase family. TyrS type 1 subfamily. Homodimer.

The protein resides in the cytoplasm. The enzyme catalyses tRNA(Tyr) + L-tyrosine + ATP = L-tyrosyl-tRNA(Tyr) + AMP + diphosphate + H(+). Functionally, catalyzes the attachment of tyrosine to tRNA(Tyr) in a two-step reaction: tyrosine is first activated by ATP to form Tyr-AMP and then transferred to the acceptor end of tRNA(Tyr). The chain is Tyrosine--tRNA ligase 1 from Bacillus cereus (strain ATCC 10987 / NRS 248).